A 172-amino-acid polypeptide reads, in one-letter code: Translationally-controlled tumor protein homolog (172 aa).

A TCTP domain is found at Met-1–Cys-172.

The protein belongs to the TCTP family. Expressed by the venom gland.

It is found in the secreted. Functionally, venom protein that causes edema, enhances vascular permeability and is likely related to the inflammatory activity of the venom. In Crotalus adamanteus (Eastern diamondback rattlesnake), this protein is Translationally-controlled tumor protein homolog.